The following is a 149-amino-acid chain: Ribonuclease-like 3 (149 aa).

The N-terminal stretch at 1–22 is a signal peptide; the sequence is MGIHQCTAVVLLLLCASLSTYG. The residue at position 23 (glutamine 23) is a Pyrrolidone carboxylic acid. Histidine 38 functions as the Proton acceptor in the catalytic mechanism. 3 disulfide bridges follow: cysteine 48–cysteine 109, cysteine 66–cysteine 120, and cysteine 84–cysteine 135. Position 67-71 (67-71) interacts with substrate; it reads KEVNT. Histidine 142 serves as the catalytic Proton donor.

It belongs to the pancreatic ribonuclease family. Post-translationally, cleavage between Arg-55 and Arg-56 is catalyzed by a membrane-localized Gram-negative bacterium protease (OmpT in E.coli). The excised fragment is then transported to the bacterium cytosol for cleavage of the disulfide bridge linking Cys-48 and Cys-109, thus separating the N-terminal and LF-ZF3. LF-ZF3 but not the N-terminal peptide possesses bactericidal activity. As to expression, strongly expressed in the adult liver and gut, and weakly in the heart and testis.

Its subcellular location is the secreted. In terms of biological role, ribonuclease. Angiogenic. Plays a role in host defense. Exhibits strong antibacterial activity against Gram-negative bacteria but mild antibacterial activity against Gram-positive bacteria. The RNase activity is not required for the bactericidal activity. This is Ribonuclease-like 3 from Danio rerio (Zebrafish).